The primary structure comprises 1108 residues: Receptor-type guanylate cyclase gcy-20 (1108 aa).

Positions 1-15 are cleaved as a signal peptide; the sequence is MRILLLLLQNILVFC. Residues 16–474 lie on the Extracellular side of the membrane; the sequence is QFLQTIKVGL…ECPADFVKEY (459 aa). N66, N131, N319, N341, N366, and N380 each carry an N-linked (GlcNAc...) asparagine glycan. A helical transmembrane segment spans residues 475–495; the sequence is LVYTIIAAFIVILALLAGCAG. The Protein kinase domain maps to 483-803; it reads FIVILALLAG…IEQVRSHLNG (321 aa). Residues 489–497 and K571 each bind ATP; that span reads LLAGCAGLL. Residues 496-1108 lie on the Cytoplasmic side of the membrane; it reads LLYTMHMKRK…QAGDNNSETV (613 aa). The 131-residue stretch at 876–1006 folds into the Guanylate cyclase domain; sequence TIFFSDVVQF…DAVNTASRME (131 aa). A disordered region spans residues 1083–1108; the sequence is LEKNAEGSETSSLSVDQAGDNNSETV. The span at 1089-1108 shows a compositional bias: polar residues; the sequence is GSETSSLSVDQAGDNNSETV.

This sequence belongs to the adenylyl cyclase class-4/guanylyl cyclase family. Expressed asymmetrically in ASE left (ASEL) sensory neuron. Expressed in excretory gland and canal cell.

It localises to the cell membrane. The catalysed reaction is GTP = 3',5'-cyclic GMP + diphosphate. Functionally, guanylate cyclase involved in the production of the second messenger cGMP. This Caenorhabditis elegans protein is Receptor-type guanylate cyclase gcy-20.